The following is a 475-amino-acid chain: Ribulose bisphosphate carboxylase large chain (475 aa).

The propeptide occupies 1–2 (MS). At P3 the chain carries N-acetylproline. Residue K14 is modified to N6,N6,N6-trimethyllysine. Residues N123 and T173 each coordinate substrate. K175 (proton acceptor) is an active-site residue. Residue K177 participates in substrate binding. K201, D203, and E204 together coordinate Mg(2+). Position 201 is an N6-carboxylysine (K201). H294 acts as the Proton acceptor in catalysis. Residues R295, H327, and S379 each coordinate substrate.

It belongs to the RuBisCO large chain family. Type I subfamily. In terms of assembly, heterohexadecamer of 8 large chains and 8 small chains; disulfide-linked. The disulfide link is formed within the large subunit homodimers. It depends on Mg(2+) as a cofactor. In terms of processing, the disulfide bond which can form in the large chain dimeric partners within the hexadecamer appears to be associated with oxidative stress and protein turnover.

The protein localises to the plastid. Its subcellular location is the chloroplast. It catalyses the reaction 2 (2R)-3-phosphoglycerate + 2 H(+) = D-ribulose 1,5-bisphosphate + CO2 + H2O. It carries out the reaction D-ribulose 1,5-bisphosphate + O2 = 2-phosphoglycolate + (2R)-3-phosphoglycerate + 2 H(+). Its function is as follows. RuBisCO catalyzes two reactions: the carboxylation of D-ribulose 1,5-bisphosphate, the primary event in carbon dioxide fixation, as well as the oxidative fragmentation of the pentose substrate in the photorespiration process. Both reactions occur simultaneously and in competition at the same active site. This Physcomitrium patens (Spreading-leaved earth moss) protein is Ribulose bisphosphate carboxylase large chain.